The chain runs to 327 residues: Complex I intermediate-associated protein 30, mitochondrial (327 aa).

A mitochondrion-targeting transit peptide spans 1 to 24; it reads MALVHKLLRGTYILRKFSKPASAL. The disordered stretch occupies residues 42–63; the sequence is PVASPGKASSQRKTEGDLQGDH. Positions 53–63 are enriched in basic and acidic residues; sequence RKTEGDLQGDH. Ser-318 carries the phosphoserine modification.

The protein belongs to the CIA30 family. In terms of assembly, part of the mitochondrial complex I assembly/MCIA complex that comprises at least the core subunits TMEM126B, NDUFAF1, ECSIT and ACAD9 and complement subunits such as COA1 and TMEM186. Interacts with ECSIT. Interacts with ACAD9. At early stages of complex I assembly, it is found in intermediate subcomplexes that contain different subunits including NDUFB6, NDUFA6, NDUFA9, NDUFS3, NDUFS7, ND1, ND2 and ND3. Interacts with TMEM70 and TMEM242.

Its subcellular location is the mitochondrion. The protein resides in the mitochondrion matrix. In terms of biological role, as part of the MCIA complex, involved in the assembly of the mitochondrial complex I. The polypeptide is Complex I intermediate-associated protein 30, mitochondrial (Pongo pygmaeus (Bornean orangutan)).